The chain runs to 225 residues: Uridylate kinase (225 aa).

ATP is bound at residue 9-10; it reads GS. Gly46 lines the UMP pocket. Gly47 and Arg51 together coordinate ATP. Residues Asp67 and 115 to 121 each bind UMP; that span reads THPAHTT. The ATP site is built by Thr141, Asn142, Tyr147, and Asp150.

This sequence belongs to the UMP kinase family. Homohexamer.

The protein localises to the cytoplasm. It carries out the reaction UMP + ATP = UDP + ADP. It functions in the pathway pyrimidine metabolism; CTP biosynthesis via de novo pathway; UDP from UMP (UMPK route): step 1/1. Its activity is regulated as follows. Inhibited by UTP. Its function is as follows. Catalyzes the reversible phosphorylation of UMP to UDP. This chain is Uridylate kinase, found in Methanococcus maripaludis (strain C5 / ATCC BAA-1333).